Consider the following 1393-residue polypeptide: DNA-directed RNA polymerase subunit beta' (1393 aa).

Residues C72, C74, C87, and C90 each coordinate Zn(2+). The Mg(2+) site is built by D463, D465, and D467. Positions 812, 887, 894, and 897 each coordinate Zn(2+).

The protein belongs to the RNA polymerase beta' chain family. In terms of assembly, the RNAP catalytic core consists of 2 alpha, 1 beta, 1 beta' and 1 omega subunit. When a sigma factor is associated with the core the holoenzyme is formed, which can initiate transcription. Mg(2+) is required as a cofactor. The cofactor is Zn(2+).

It catalyses the reaction RNA(n) + a ribonucleoside 5'-triphosphate = RNA(n+1) + diphosphate. Functionally, DNA-dependent RNA polymerase catalyzes the transcription of DNA into RNA using the four ribonucleoside triphosphates as substrates. In Chlamydia pneumoniae (Chlamydophila pneumoniae), this protein is DNA-directed RNA polymerase subunit beta'.